The sequence spans 256 residues: MDCNNLLNAARRGEAELLTRLLNEGCSPDVQDDYGRTPLYYAAERGDVGTVDLLIKAGADPNARDREGKTPIIIATQSRKFGVIPLLSASAVGVEEALYTAARNGCHKAVRYMLARGVRPGASHGESLLHLVAGDAGLVKLLLEYGVDPNARDAHGKTPLHMASEHNCAQCVELLLKRGPDVNVKDGAGRTPLHYADDVDCIKLLLRYGADLNAVDNMGRTPLHYAEDGLAAEALLKRGARPVPDKYGELPTIPTC.

8 ANK repeats span residues 1 to 30, 34 to 63, 67 to 92, 93 to 122, 124 to 151, 155 to 184, 188 to 214, and 218 to 245; these read MDCNNLLNAARRGEAELLTRLLNEGCSPDV, YGRTPLYYAAERGDVGTVDLLIKAGADPNA, EGKTPIIIATQSRKFGVIPLLSASAV, GVEEALYTAARNGCHKAVRYMLARGVRPGA, HGESLLHLVAGDAGLVKLLLEYGVDPNA, HGKTPLHMASEHNCAQCVELLLKRGPDVNV, AGRTPLHYADDVDCIKLLLRYGADLNA, and MGRTPLHYAEDGLAAEALLKRGARPVPD.

This chain is Putative ankyrin repeat protein PAE1861, found in Pyrobaculum aerophilum (strain ATCC 51768 / DSM 7523 / JCM 9630 / CIP 104966 / NBRC 100827 / IM2).